Reading from the N-terminus, the 416-residue chain is Tyrosine aminotransferase (416 aa).

K253 is modified (N6-(pyridoxal phosphate)lysine).

The protein belongs to the class-I pyridoxal-phosphate-dependent aminotransferase family. In terms of assembly, homodimer. Pyridoxal 5'-phosphate serves as cofactor. Post-translationally, the N-terminus is blocked.

It localises to the cytoplasm. Its subcellular location is the mitochondrion. It carries out the reaction L-tyrosine + 2-oxoglutarate = 3-(4-hydroxyphenyl)pyruvate + L-glutamate. Its pathway is amino-acid degradation; L-phenylalanine degradation; acetoacetate and fumarate from L-phenylalanine: step 2/6. Functionally, transaminase involved in tyrosine breakdown. Converts tyrosine to p-hydroxyphenylpyruvate. This chain is Tyrosine aminotransferase, found in Trypanosoma cruzi.